A 436-amino-acid polypeptide reads, in one-letter code: Glutamyl-tRNA reductase (436 aa).

Residues 49–52 (TCNR), serine 109, 114–116 (EGQ), and glutamine 120 each bind substrate. Cysteine 50 serves as the catalytic Nucleophile. 198 to 203 (GAGRMS) serves as a coordination point for NADP(+).

This sequence belongs to the glutamyl-tRNA reductase family. In terms of assembly, homodimer.

The catalysed reaction is (S)-4-amino-5-oxopentanoate + tRNA(Glu) + NADP(+) = L-glutamyl-tRNA(Glu) + NADPH + H(+). It functions in the pathway porphyrin-containing compound metabolism; protoporphyrin-IX biosynthesis; 5-aminolevulinate from L-glutamyl-tRNA(Glu): step 1/2. Its pathway is porphyrin-containing compound metabolism; chlorophyll biosynthesis. In terms of biological role, catalyzes the NADPH-dependent reduction of glutamyl-tRNA(Glu) to glutamate 1-semialdehyde (GSA). This is Glutamyl-tRNA reductase from Prochlorococcus marinus (strain MIT 9313).